Reading from the N-terminus, the 622-residue chain is Low affinity potassium transport system protein Kup (622 aa).

The next 12 helical transmembrane spans lie at 9–29, 49–69, 103–123, 137–157, 165–185, 213–233, 247–267, 276–296, 337–357, 363–383, 396–416, and 419–439; these read LPAITLAAIGVVYGDIGTSPL, VFGFLSLIFWLLIFVVSIKYL, VIMGLIGGSFFYGEVVITPAI, PQLDTWIVPLSIIVLTLLFMI, VGKLFAPIMLTWFLILAGLGL, VSFIALGAVVLSITGVEALYA, WFTVVLPSLTLNYFGQGALLL, PFFLLAPDWALIPLLIIAALA, IYIPFVNWMLYVAVVIVIVSF, LAAAYGIAVTGTMVLTSILST, FVALILIAFLCVDIPLFTANL, and LLSGGWLPLSLGTVMFIVMTT.

This sequence belongs to the HAK/KUP transporter (TC 2.A.72) family.

The protein localises to the cell inner membrane. The catalysed reaction is K(+)(in) + H(+)(in) = K(+)(out) + H(+)(out). Functionally, responsible for the low-affinity transport of potassium into the cell. Likely operates as a K(+):H(+) symporter. In Escherichia coli O157:H7, this protein is Low affinity potassium transport system protein Kup.